We begin with the raw amino-acid sequence, 122 residues long: Large ribosomal subunit protein uL14 (122 aa).

The protein belongs to the universal ribosomal protein uL14 family. As to quaternary structure, part of the 50S ribosomal subunit. Forms a cluster with proteins L3 and L19. In the 70S ribosome, L14 and L19 interact and together make contacts with the 16S rRNA in bridges B5 and B8.

Binds to 23S rRNA. Forms part of two intersubunit bridges in the 70S ribosome. In Bifidobacterium longum (strain DJO10A), this protein is Large ribosomal subunit protein uL14.